The following is a 216-amino-acid chain: Uracil phosphoribosyltransferase (216 aa).

5-phospho-alpha-D-ribose 1-diphosphate contacts are provided by residues Arg-85, Arg-110, and 135 to 143 (DPMVATGYS). Uracil-binding positions include Ile-200 and 205 to 207 (GDA). Asp-206 contacts 5-phospho-alpha-D-ribose 1-diphosphate.

The protein belongs to the UPRTase family. It depends on Mg(2+) as a cofactor.

The catalysed reaction is UMP + diphosphate = 5-phospho-alpha-D-ribose 1-diphosphate + uracil. It functions in the pathway pyrimidine metabolism; UMP biosynthesis via salvage pathway; UMP from uracil: step 1/1. Its activity is regulated as follows. Allosterically activated by GTP. Catalyzes the conversion of uracil and 5-phospho-alpha-D-ribose 1-diphosphate (PRPP) to UMP and diphosphate. The protein is Uracil phosphoribosyltransferase of Paraburkholderia phymatum (strain DSM 17167 / CIP 108236 / LMG 21445 / STM815) (Burkholderia phymatum).